Here is a 127-residue protein sequence, read N- to C-terminus: uncharacterized protein (127 aa).

The segment covering 1-13 (MEAGNRSGTPQHR) has biased composition (polar residues). Residues 1–26 (MEAGNRSGTPQHRQLSEIRQDLSSSP) are disordered.

This is an uncharacterized protein from Saccharomyces cerevisiae (strain ATCC 204508 / S288c) (Baker's yeast).